Reading from the N-terminus, the 478-residue chain is NADH-quinone oxidoreductase subunit N (478 aa).

14 helical membrane-spanning segments follow: residues 5–25 (LASPEIVLALCGLVILLVGVA), 37–57 (MLTLGAFLVTGLLTVSGALGL), 68–88 (FAVMVKLLILSGASIAVVLSL), 99–119 (FEFPVLTLFSTVGMMVMVSAS), 121–141 (FMTLYMGLELMSLAIYVLAAF), 156–176 (FVLGSLASGLLLYGISLIYGF), 199–219 (LTVGVVFVIAGLAFKISAAPF), 231–251 (PTPVTAFMGTAPKVAAIAMML), 268–288 (VVALISVVSMVWGALAAIGQT), 293–313 (LMAYSSIGHMGYALVGLAAGS), 320–340 (LLIYLVTYVFMNTGTFACILA), 365–385 (ALLLAIFMFSMAGIPPMSGFF), 401–421 (LLWGLAVIGVLTSVIGAYYYL), and 446–466 (VVAVGSAIFTALFFLFPAPIL).

Belongs to the complex I subunit 2 family. As to quaternary structure, NDH-1 is composed of 14 different subunits. Subunits NuoA, H, J, K, L, M, N constitute the membrane sector of the complex.

The protein localises to the cell inner membrane. It catalyses the reaction a quinone + NADH + 5 H(+)(in) = a quinol + NAD(+) + 4 H(+)(out). In terms of biological role, NDH-1 shuttles electrons from NADH, via FMN and iron-sulfur (Fe-S) centers, to quinones in the respiratory chain. The immediate electron acceptor for the enzyme in this species is believed to be ubiquinone. Couples the redox reaction to proton translocation (for every two electrons transferred, four hydrogen ions are translocated across the cytoplasmic membrane), and thus conserves the redox energy in a proton gradient. This chain is NADH-quinone oxidoreductase subunit N, found in Granulibacter bethesdensis (strain ATCC BAA-1260 / CGDNIH1).